A 621-amino-acid chain; its full sequence is Kininogen-1 (621 aa).

The N-terminal stretch at 1–18 (MKLITILFLCSRLLPSLT) is a signal peptide. One can recognise a Cystatin kininogen-type 1 domain in the interval 27–131 (CNDQDVFKAV…IQTCLITPAE (105 aa)). Disulfide bonds link Cys-27–Cys-591, Cys-82–Cys-93, Cys-106–Cys-125, Cys-141–Cys-144, Cys-205–Cys-217, Cys-228–Cys-247, Cys-263–Cys-266, Cys-327–Cys-339, and Cys-350–Cys-369. 2 N-linked (GlcNAc...) asparagine glycosylation sites follow: Asn-47 and Asn-87. Residue Thr-136 is glycosylated (O-linked (GalNAc...) threonine; partial). The region spanning 150–253 (TKSPDLEPVL…SQKCDLYPVK (104 aa)) is the Cystatin kininogen-type 2 domain. Residues Asn-168 and Asn-169 are each glycosylated (N-linked (GlcNAc...) asparagine). The N-linked (GlcNAc...) asparagine; partial glycan is linked to Asn-197. N-linked (GlcNAc...) asparagine glycosylation occurs at Asn-204. The 104-residue stretch at 272–375 (VDSPDLEEPL…TVNCQPLGQT (104 aa)) folds into the Cystatin kininogen-type 3 domain. Ser-331 is subject to Phosphoserine. A disordered region spans residues 396-497 (EGSTTVSLPH…GKNNGKHYDW (102 aa)). Ser-398 is a glycosylation site (O-linked (GalNAc...) serine). Residues Thr-399 and Thr-400 are each glycosylated (O-linked (GalNAc...) threonine). Ser-406 is a glycosylation site (O-linked (GalNAc...) serine). A compositionally biased stretch (basic residues) spans 444-492 (GHKHKHDQGHGHHGSHGLGHGHQKQHGLGHGHKHGHGHGKHKNKGKNNG). Ser-512 carries an O-linked (GalNAc...) serine glycan. 6 O-linked (GalNAc...) threonine glycosylation sites follow: Thr-520, Thr-524, Thr-536, Thr-548, Thr-553, and Thr-570. O-linked (GalNAc...) serine glycosylation is present at Ser-581.

Bradykinin is released from kininogen by plasma kallikrein. In terms of processing, phosphorylated by FAM20C in the extracellular medium. Post-translationally, bradykinin is inactivated by ACE, which removes the dipeptide Arg-Phe from its C-terminus. As to expression, plasma.

It is found in the secreted. It localises to the extracellular space. Its function is as follows. Kininogens are inhibitors of thiol proteases. HMW-kininogen plays an important role in blood coagulation by helping to position optimally prekallikrein and factor XI next to factor XII; HMW-kininogen inhibits the thrombin- and plasmin-induced aggregation of thrombocytes. LMW-kininogen inhibits the aggregation of thrombocytes. LMW-kininogen is in contrast to HMW-kininogen not involved in blood clotting. Functionally, the active peptide bradykinin is a potent vasodilatator that is released from HMW-kininogen shows a variety of physiological effects: (A) influence in smooth muscle contraction, (B) induction of hypotension, (C) natriuresis and diuresis, (D) decrease in blood glucose level, (E) it is a mediator of inflammation and causes (E1) increase in vascular permeability, (E2) stimulation of nociceptors (4E3) release of other mediators of inflammation (e.g. prostaglandins), (F) it has a cardioprotective effect (directly via bradykinin action, indirectly via endothelium-derived relaxing factor action). This chain is Kininogen-1 (KNG1), found in Bos taurus (Bovine).